Consider the following 293-residue polypeptide: Bifunctional protein FolD (293 aa).

Residues 166 to 168 (GAS) and isoleucine 232 contribute to the NADP(+) site.

Belongs to the tetrahydrofolate dehydrogenase/cyclohydrolase family. In terms of assembly, homodimer.

The catalysed reaction is (6R)-5,10-methylene-5,6,7,8-tetrahydrofolate + NADP(+) = (6R)-5,10-methenyltetrahydrofolate + NADPH. It carries out the reaction (6R)-5,10-methenyltetrahydrofolate + H2O = (6R)-10-formyltetrahydrofolate + H(+). Its pathway is one-carbon metabolism; tetrahydrofolate interconversion. In terms of biological role, catalyzes the oxidation of 5,10-methylenetetrahydrofolate to 5,10-methenyltetrahydrofolate and then the hydrolysis of 5,10-methenyltetrahydrofolate to 10-formyltetrahydrofolate. This is Bifunctional protein FolD from Yersinia enterocolitica serotype O:8 / biotype 1B (strain NCTC 13174 / 8081).